The chain runs to 191 residues: MIEIPSDLHKDLVPLVFLLGDWAGAGVHDFPGAEKCNFGQEVSFTHDGRDFLEYQSHTWVLDNDGNKVRPLESEHGFWRIDANRKVEVTMTRDDGVIEIWYGELADQKPQIDLVTDAVARTAASQPYTGGKRLYGYVKSDLMWVGEKQTPEVELRPYMSAHLKKVVTPEDVERWAKALPDDMPDDGIAFFK.

The GXWXGXG signature appears at 20 to 26 (GDWAGAG).

The protein belongs to the nitrobindin family.

This is Ferric nitrobindin-like protein from Streptomyces coelicolor (strain ATCC BAA-471 / A3(2) / M145).